A 555-amino-acid polypeptide reads, in one-letter code: Gamma-aminobutyric acid receptor subunit alpha-4 (555 aa).

An N-terminal signal peptide occupies residues 1 to 35; it reads MVSAKKVPAIAMSFGVSFALLHFLCLAACLNESPG. The Extracellular segment spans residues 36–259; the sequence is QNQKEEKLCP…FHLRRKMGYF (224 aa). Residue N47 is glycosylated (N-linked (GlcNAc...) asparagine). Position 100 (R100) interacts with 4-aminobutanoate. N144 and N157 each carry an N-linked (GlcNAc...) asparagine glycan. T163 is a binding site for 4-aminobutanoate. C172 and C186 are oxidised to a cystine. Residues 260 to 280 traverse the membrane as a helical segment; that stretch reads MIQTYIPCIMTVILSQVSFWI. The Cytoplasmic portion of the chain corresponds to 281–284; it reads NKES. Residues 285–305 traverse the membrane as a helical segment; that stretch reads VPARTVFGITTVLTMTTLSIS. The Extracellular segment spans residues 306–318; that stretch reads ARHSLPKVSYATA. A helical transmembrane segment spans residues 319–341; sequence MDWFIAVCFAFVFSALIEFAAVN. The Cytoplasmic portion of the chain corresponds to 342-518; sequence YFTNVQMEKA…PPPSGSGTSK (177 aa). Disordered stretches follow at residues 354-435 and 495-516; these read KTSK…SPNP and GTSG…GSGT. A compositionally biased stretch (low complexity) spans 410–421; it reads SSKSSTVVQGSS. Residues 422–435 show a composition bias toward polar residues; sequence EATPQSYLASSPNP. Residues 519 to 545 form a helical membrane-spanning segment; the sequence is IDKYARILFPVTFGAFNMVYWVVYLSK. The Extracellular segment spans residues 546–555; it reads DTMEKSESLM.

Belongs to the ligand-gated ion channel (TC 1.A.9) family. Gamma-aminobutyric acid receptor (TC 1.A.9.5) subfamily. GABRA4 sub-subfamily. In terms of assembly, heteropentamer, formed by a combination of alpha (GABRA1-6), beta (GABRB1-3), gamma (GABRG1-3), delta (GABRD), epsilon (GABRE), rho (GABRR1-3), pi (GABRP) and theta (GABRQ) chains, each subunit exhibiting distinct physiological and pharmacological properties. In terms of tissue distribution, expressed in the brain.

The protein localises to the cell membrane. The protein resides in the postsynaptic cell membrane. The catalysed reaction is chloride(in) = chloride(out). Potentiated by histamine. In terms of biological role, alpha subunit of the heteropentameric ligand-gated chloride channel gated by gamma-aminobutyric acid (GABA), a major inhibitory neurotransmitter in the brain. GABA-gated chloride channels, also named GABA(A) receptors (GABAAR), consist of five subunits arranged around a central pore and contain GABA active binding site(s) located at the alpha and beta subunit interface(s). When activated by GABA, GABAARs selectively allow the flow of chloride anions across the cell membrane down their electrochemical gradient. GABAARs containing alpha-4 are predominantly extrasynaptic, contributing to tonic inhibition in dentate granule cells and thalamic relay neurons. Extrasynaptic alpha-4-containing GABAARs control levels of excitability and network activity. GABAARs containing alpha-4 are often found with the delta or gamma-2 subunits, in combination with beta subunits. GABAAR containing alpha-4-beta-3-delta subunits can simultaneously bind GABA and histamine where histamine binds at the interface of two neighboring beta subunits, which may be involved in the regulation of sleep and wakefulness. The polypeptide is Gamma-aminobutyric acid receptor subunit alpha-4 (GABRA4) (Bos taurus (Bovine)).